Consider the following 539-residue polypeptide: Glycerophosphoinositol inositolphosphodiesterase GDPD2 (539 aa).

Over 1–38 (MAESPGCCSVWARCLHCLYSCHWRKCPRERMQTSKCDC) the chain is Cytoplasmic. The helical transmembrane segment at 39–59 (IWFGLLFLTFLLSLSWLYIGL) threads the bilayer. Over 60–85 (VLLNDLHNFNEFLFRRWGHWMDWSLA) the chain is Extracellular. A helical transmembrane segment spans residues 86–106 (FLLVISLLVTYASLLLVLALL). The Cytoplasmic segment spans residues 107-121 (LRLCRQPLHLHSLHK). The helical transmembrane segment at 122–142 (VLLLLIMLLVAAGLVGLDIQW) threads the bilayer. The Extracellular portion of the chain corresponds to 143–154 (QQEWHSLRVSLQ). The chain crosses the membrane as a helical span at residues 155–175 (ATAPFLHIGAAAGIALLAWPV). At 176–188 (ADTFYRIHRRGPK) the chain is on the cytoplasmic side. Residues 189-209 (ILLLLLFFGVVLVIYLAPLCI) traverse the membrane as a helical segment. Over 210–490 (SSPCIMEPRD…PIWLITPQTY (281 aa)) the chain is Extracellular. One can recognise a GP-PDE domain in the interval 224–479 (PGLVGHRGAP…NDCQLLQQMR (256 aa)). A divalent metal cation contacts are provided by glutamate 256, aspartate 258, and histidine 271. Asparagine 442 carries an N-linked (GlcNAc...) asparagine glycan. The chain crosses the membrane as a helical span at residues 491 to 511 (LIIWVITNCVSTMLLLWTFLL). Topologically, residues 512 to 539 (QRRFVKKRGKTGLETAVLLTRINNFMME) are cytoplasmic.

The protein belongs to the glycerophosphoryl diester phosphodiesterase family. The cofactor is Ca(2+).

It is found in the cell membrane. It localises to the cytoplasm. The protein resides in the cytoskeleton. It catalyses the reaction sn-glycero-3-phospho-1D-myo-inositol + H2O = 1D-myo-inositol 1-phosphate + glycerol + H(+). Has glycerophosphoinositol inositolphosphodiesterase activity and specifically hydrolyzes glycerophosphoinositol, with no activity for other substrates such as glycerophosphoinositol 4-phosphate, glycerophosphocholine, glycerophosphoethanolamine, and glycerophosphoserine. Accelerates the program of osteoblast differentiation and growth. May play a role in remodeling of the actin cytoskeleton. This is Glycerophosphoinositol inositolphosphodiesterase GDPD2 (GDPD2) from Homo sapiens (Human).